The primary structure comprises 498 residues: Diacylglycerol O-acyltransferase 1 (498 aa).

The disordered stretch occupies residues 1-66; sequence MGDRGGAGSS…AHTRDKDRQT (66 aa). At 1–92 the chain is on the cytoplasmic side; sequence MGDRGGAGSS…SLFSSDSGFS (92 aa). The interval 1–96 is involved in homomerization; sequence MGDRGGAGSS…SDSGFSNYRG (96 aa). Phosphoserine is present on Ser-20. The segment covering 58–68 has biased composition (basic and acidic residues); that stretch reads HTRDKDRQTSV. Residues 93–127 traverse the membrane as a helical segment; sequence NYRGILNWCVVMLILSNARLSLENLIKYGILVDPI. The Lumenal portion of the chain corresponds to 128 to 139; that stretch reads QVVSLFLKDPYS. An extracellular loop 1 (EL1) region spans residues 128–139; it reads QVVSLFLKDPYS. Residues 140 to 165 traverse the membrane as a helical segment; sequence WPAPCLIIASNIFIVATFQIEKRLSV. The interval 140 to 498 is MBOAT fold; the sequence is WPAPCLIIAS…VLNYDAPVGA (359 aa). The Cytoplasmic segment spans residues 166–170; the sequence is GALTE. Residues 171–193 form a helical membrane-spanning segment; the sequence is QMGLLLHVVNLATIICFPAAVAL. The Lumenal segment spans residues 194 to 200; sequence LVESITP. Residues 201 to 232 traverse the membrane as a helical segment; that stretch reads VGSLFALASYSIIFLKLSSYRDVNLWCRQRRV. The Cytoplasmic segment spans residues 233–284; that stretch reads KAKAVSAGKKVSGAAAQNTVSYPDNLTYRDLYYFIFAPTLCYELNFPRSPRI. The interval 235-287 is intracellular loop 1 (IL1); it reads KAVSAGKKVSGAAAQNTVSYPDNLTYRDLYYFIFAPTLCYELNFPRSPRIRKR. A helical transmembrane segment spans residues 285 to 319; that stretch reads RKRFLLRRVLEMLFFTQLQVGLIQQWMVPTIQNSM. At 320–326 the chain is on the lumenal side; sequence KPFKDMD. Residues 327 to 364 traverse the membrane as a helical segment; the sequence is YSRIIERLLKLAVPNHLIWLIFFYWLFHSCLNAVAELL. At 365–410 the chain is on the cytoplasmic side; that stretch reads QFGDREFYRDWWNAESVTYFWQNWNIPVHKWCIRHFYKPMLRLGSN. Residues 365–410 are intracellular loop 2 (IL2); it reads QFGDREFYRDWWNAESVTYFWQNWNIPVHKWCIRHFYKPMLRLGSN. The short motif at 371–377 is the FYXDWWN motif element; the sequence is FYRDWWN. Residues 385 to 393, Tyr-401, and Arg-415 each bind an acyl-CoA; that span reads WQNWNIPVH. Positions 391 to 405 are amphipathic helix (AH); the sequence is PVHKWCIRHFYKPML. The chain crosses the membrane as a helical span at residues 411-431; it reads KWMARTGVFWASAFFHEYLVS. His-426 is an active-site residue. At 432 to 439 the chain is on the lumenal side; the sequence is IPLRMFRL. The helical transmembrane segment at 440–458 threads the bilayer; that stretch reads WAFTAMMAQVPLAWIVNRF. Residues 459 to 460 lie on the Cytoplasmic side of the membrane; it reads FQ. Residues 461 to 492 form a helical membrane-spanning segment; the sequence is GNYGNAAVWVTLIIGQPVAVLMYVHDYYVLNY. Residue Tyr-488 participates in an acyl-CoA binding. The Lumenal segment spans residues 493–498; that stretch reads DAPVGA.

This sequence belongs to the membrane-bound acyltransferase family. Sterol o-acyltransferase subfamily. As to quaternary structure, homodimer or homotetramer; both forms have similar enzymatic activities.

The protein localises to the endoplasmic reticulum membrane. It catalyses the reaction an acyl-CoA + a 1,2-diacyl-sn-glycerol = a triacyl-sn-glycerol + CoA. It carries out the reaction all-trans-retinol + an acyl-CoA = an all-trans-retinyl ester + CoA. The enzyme catalyses 2-(9Z-octadecenoyl)-glycerol + (9Z)-octadecenoyl-CoA = 1,2-di-(9Z-octadecenoyl)-sn-glycerol + CoA. The catalysed reaction is 1,2-di-(9Z-octadecenoyl)-sn-glycerol + (9Z)-octadecenoyl-CoA = 1,2,3-tri-(9Z-octadecenoyl)-glycerol + CoA. It catalyses the reaction all-trans-retinol + hexadecanoyl-CoA = all-trans-retinyl hexadecanoate + CoA. It carries out the reaction 1-O-(9Z-octadecenyl)-glycerol + (9Z)-octadecenoyl-CoA = 1-O-(9Z-octadecyl)-3-(9Z-octadecenoyl)-glycerol + CoA. The enzyme catalyses 1-O-(9Z-octadecyl)-3-(9Z-octadecenoyl)-glycerol + (9Z)-octadecenoyl-CoA = 1-O-(9Z-octadecenyl)-2,3-di-(9Z-octadecenoyl)glycerol + CoA. The catalysed reaction is 1-(9Z-octadecenoyl)-glycerol + (9Z)-octadecenoyl-CoA = 1,2-di-(9Z-octadecenoyl)-glycerol + CoA. It catalyses the reaction 1,2-di-(9Z-octadecenoyl)-glycerol + (9Z)-octadecenoate + H(+) = 1,2,3-tri-(9Z-octadecenoyl)-glycerol + H2O. It carries out the reaction 1-octadecanoyl-2-(5Z,8Z,11Z,14Z-eicosatetraenoyl)-sn-glycerol + (9Z)-octadecenoyl-CoA = 1-octadecanoyl-2-(5Z,8Z,11Z,14Z)-eicosatetraenoyl-3-(9Z)-octadecenoyl-sn-glycerol + CoA. The enzyme catalyses hexadecane-1,2-diol + 2 hexadecanoyl-CoA = 1,2-O,O-dihexadecanoyl-1,2-hexadecanediol + 2 CoA. The catalysed reaction is hexadecane-1,2-diol + hexadecanoyl-CoA = 2-hydroxyhexadecyl hexadecanoate + CoA. It catalyses the reaction 2-(9Z-octadecenoyl)-glycerol + hexadecanoyl-CoA = 1-hexadecanoyl-2-(9Z-octadecenoyl)-sn-glycerol + CoA. It carries out the reaction 1,2-di-(9Z-octadecenoyl)-sn-glycerol + hexadecanoyl-CoA = 1,2-di-(9Z)-octadecenoyl-3-hexadecanoyl-sn-glycerol + CoA. The enzyme catalyses hexadecan-1-ol + hexadecanoyl-CoA = hexadecanyl hexadecanoate + CoA. The catalysed reaction is 13-cis-retinol + hexadecanoyl-CoA = 13-cis-retinyl hexadecanoate + CoA. It catalyses the reaction 1,3-di-(9Z-octadecenoyl)-glycerol + (9Z)-octadecenoyl-CoA = 1,2,3-tri-(9Z-octadecenoyl)-glycerol + CoA. It carries out the reaction 2,3-di-(9Z)-octadecenoyl-sn-glycerol + (9Z)-octadecenoyl-CoA = 1,2,3-tri-(9Z-octadecenoyl)-glycerol + CoA. Its pathway is lipid metabolism; glycerolipid metabolism. Catalyzes the terminal and only committed step in triacylglycerol synthesis by using diacylglycerol and fatty acyl CoA as substrates. Highly expressed in epithelial cells of the small intestine and its activity is essential for the absorption of dietary fats. In liver, plays a role in esterifying exogenous fatty acids to glycerol, and is required to synthesize fat for storage. Also present in female mammary glands, where it produces fat in the milk. May be involved in VLDL (very low density lipoprotein) assembly. In contrast to DGAT2 it is not essential for survival. Functions as the major acyl-CoA retinol acyltransferase (ARAT) in the skin, where it acts to maintain retinoid homeostasis and prevent retinoid toxicity leading to skin and hair disorders. Exhibits additional acyltransferase activities, includin acyl CoA:monoacylglycerol acyltransferase (MGAT), wax monoester and wax diester synthases. Also able to use 1-monoalkylglycerol (1-MAkG) as an acyl acceptor for the synthesis of monoalkyl-monoacylglycerol (MAMAG). The chain is Diacylglycerol O-acyltransferase 1 from Rattus norvegicus (Rat).